The sequence spans 595 residues: Chaperone protein HscA homolog (595 aa).

Belongs to the heat shock protein 70 family.

Its function is as follows. Chaperone involved in the maturation of iron-sulfur cluster-containing proteins. Has a low intrinsic ATPase activity which is markedly stimulated by HscB. The chain is Chaperone protein HscA homolog from Rickettsia africae (strain ESF-5).